The chain runs to 405 residues: Type II secretion system protein F (405 aa).

The Cytoplasmic segment spans residues 1-168 (MAAFEYLALD…QRQQSRQKIQ (168 aa)). Residues Thr97, Glu151, and Asp155 each coordinate Ca(2+). A helical membrane pass occupies residues 169 to 189 (LALLYPVILMVASLAIVGFLL). The Periplasmic portion of the chain corresponds to 190 to 219 (GYVVPDVVRVFIDSGQTLPLLTRVLIGVSD). Residues 220-239 (WVKAWGALAFVAAIGGVIGF) form a helical membrane-spanning segment. The Cytoplasmic portion of the chain corresponds to 240–376 (RYALRKDAFR…IGLMVGLFEP (137 aa)). A helical transmembrane segment spans residues 377–397 (FMLIFMGAVVLVIVLAILLPI). The Periplasmic portion of the chain corresponds to 398 to 405 (LSLNQLVG).

It belongs to the GSP F family. In terms of assembly, type II secretion system is composed of four main components: the outer membrane complex, the inner membrane complex, the cytoplasmic secretion ATPase and the periplasm-spanning pseudopilus. Homodimer. Interacts with XcpR/GspE and XcpY/GspL components.

It localises to the cell inner membrane. Functionally, component of the type II secretion system inner membrane complex required for the energy-dependent secretion of extracellular factors such as proteases and toxins from the periplasm. The sequence is that of Type II secretion system protein F (xcpS) from Pseudomonas aeruginosa (strain ATCC 15692 / DSM 22644 / CIP 104116 / JCM 14847 / LMG 12228 / 1C / PRS 101 / PAO1).